Reading from the N-terminus, the 396-residue chain is Methylthioribose kinase (396 aa).

ATP contacts are provided by residues Asn-44, Lys-61, and 115–117 (EDL). Asp-233 is a binding site for substrate. ATP is bound at residue 250–252 (DPE). A substrate-binding site is contributed by Arg-340.

This sequence belongs to the methylthioribose kinase family. Homodimer.

It carries out the reaction 5-(methylsulfanyl)-D-ribose + ATP = 5-(methylsulfanyl)-alpha-D-ribose 1-phosphate + ADP + H(+). It participates in amino-acid biosynthesis; L-methionine biosynthesis via salvage pathway; S-methyl-5-thio-alpha-D-ribose 1-phosphate from S-methyl-5'-thioadenosine (hydrolase route): step 2/2. Functionally, catalyzes the phosphorylation of methylthioribose into methylthioribose-1-phosphate. This is Methylthioribose kinase from Geobacillus kaustophilus (strain HTA426).